The primary structure comprises 115 residues: Histidine-rich carboxyl terminus protein 1 (115 aa).

The chain crosses the membrane as a helical span at residues 9–29; that stretch reads ALVGWITGAAVAVLLLLLLLA. A disordered region spans residues 86–115; it reads GLHHHHHPRHTPHHLHHHHHPHRHHPRHAR. The segment covering 87–115 has biased composition (basic residues); the sequence is LHHHHHPRHTPHHLHHHHHPHRHHPRHAR.

It localises to the membrane. This Homo sapiens (Human) protein is Histidine-rich carboxyl terminus protein 1 (HRCT1).